The primary structure comprises 253 residues: Phosphate import ATP-binding protein PstB 1 (253 aa).

The region spanning 7-248 is the ABC transporter domain; that stretch reads LQIRDLSVYY…PKRKETEDYI (242 aa). 39 to 46 serves as a coordination point for ATP; the sequence is GPSGSGKS.

The protein belongs to the ABC transporter superfamily. Phosphate importer (TC 3.A.1.7) family. In terms of assembly, the complex is composed of two ATP-binding proteins (PstB), two transmembrane proteins (PstC and PstA) and a solute-binding protein (PstS).

It localises to the cell membrane. It carries out the reaction phosphate(out) + ATP + H2O = ADP + 2 phosphate(in) + H(+). Its function is as follows. Part of the ABC transporter complex PstSACB involved in phosphate import. Responsible for energy coupling to the transport system. The protein is Phosphate import ATP-binding protein PstB 1 of Streptococcus pyogenes serotype M12 (strain MGAS9429).